Consider the following 189-residue polypeptide: Large ribosomal subunit protein eL14 (189 aa).

This sequence belongs to the eukaryotic ribosomal protein eL14 family.

Functionally, component of the large ribosomal subunit. The ribosome is a large ribonucleoprotein complex responsible for the synthesis of proteins in the cell. The chain is Large ribosomal subunit protein eL14 from Trypanosoma brucei brucei.